The chain runs to 570 residues: Eukaryotic translation initiation factor 2A (570 aa).

2 WD repeats span residues 274-316 (EKKG…FDTI) and 318-358 (GPRN…EIIS). The interval 468–526 (PPHLRKPLGGGGSAGPPSAAAPTPGNQNQRPAQPRANGNGNAPQPFRPQQSEQERKAFQ) is disordered. Low complexity predominate over residues 482-492 (GPPSAAAPTPG). The span at 493 to 518 (NQNQRPAQPRANGNGNAPQPFRPQQS) shows a compositional bias: polar residues. Residues 519-541 (EQERKAFQLKKKVEEIKVLKQRV) are a coiled coil.

It belongs to the WD repeat EIF2A family.

Functionally, functions in the early steps of protein synthesis of a small number of specific mRNAs. Acts by directing the binding of methionyl-tRNAi to 40S ribosomal subunits. In contrast to the eIF-2 complex, it binds methionyl-tRNAi to 40S subunits in a codon-dependent manner, whereas the eIF-2 complex binds methionyl-tRNAi to 40S subunits in a GTP-dependent manner. This Caenorhabditis elegans protein is Eukaryotic translation initiation factor 2A.